The chain runs to 453 residues: MKETNSFSQKLKQFALLFFPIFVTQMSLFAMSFFDTTMSGHASPIDLAGVAIGTSIWIPVSTGLTGILMATTPIVAQLVGSKKKEDVPHVVIQAVYLAICASFVVILIGLFTVTPILNGMRLEEPVERIAAQFLSIIAIGIIPLFTYTVLRGFIDALGKTRTTMIITLLSLPINVVLNYVLIFGNFGFPKLGGVGAAIASAATYWCILIITVMIIRTKEPFASFNIFKQLYRPSLSSWKEFLKLGVPIGFAIFFETSIFAAVTLMMSNFSTTTIAAHQAAMNFASLLYMTPLSLAMAMTIAVGFEVGAKRYNNAKQYGFIGIGLALAFALLYSILLYFFDDEIASIYTTDIQVHHLAKEFLIFAILFQISDAIATPVQGALRGYKDVNVALIMTLIAYWVIGLPLGYILATYTDWAAKGYWIGLIIGLAFGATFLLIRLFQVQRKYTTQNSRS.

12 consecutive transmembrane segments (helical) span residues 13-34 (QFAL…MSFF), 49-71 (GVAI…LMAT), 92-114 (IQAV…FTVT), 129-151 (IAAQ…TVLR), 164-183 (MIIT…VLIF), 193-215 (GVGA…VMII), 244-266 (LGVP…TLMM), 286-308 (LLYM…EVGA), 317-339 (YGFI…LYFF), 359-381 (EFLI…QGAL), 388-410 (NVAL…YILA), and 420-442 (YWIG…LFQV).

It belongs to the multi antimicrobial extrusion (MATE) (TC 2.A.66.1) family.

Its subcellular location is the cell membrane. Multidrug efflux pump. The polypeptide is Probable multidrug resistance protein NorM (norM) (Bacillus thuringiensis subsp. konkukian (strain 97-27)).